The following is a 281-amino-acid chain: 4-diphosphocytidyl-2-C-methyl-D-erythritol kinase (281 aa).

K15 is a catalytic residue. Position 98-108 (98-108) interacts with ATP; that stretch reads PTGAGLGGGSS. The active site involves D140.

Belongs to the GHMP kinase family. IspE subfamily.

The catalysed reaction is 4-CDP-2-C-methyl-D-erythritol + ATP = 4-CDP-2-C-methyl-D-erythritol 2-phosphate + ADP + H(+). It participates in isoprenoid biosynthesis; isopentenyl diphosphate biosynthesis via DXP pathway; isopentenyl diphosphate from 1-deoxy-D-xylulose 5-phosphate: step 3/6. Functionally, catalyzes the phosphorylation of the position 2 hydroxy group of 4-diphosphocytidyl-2C-methyl-D-erythritol. This is 4-diphosphocytidyl-2-C-methyl-D-erythritol kinase from Neisseria meningitidis serogroup B (strain ATCC BAA-335 / MC58).